The primary structure comprises 971 residues: Isoleucine--tRNA ligase (971 aa).

The 'HIGH' region motif lies at 64 to 74 (PYANGHIHIGH). Glutamate 602 contributes to the L-isoleucyl-5'-AMP binding site. The 'KMSKS' region signature appears at 643 to 647 (KMSKS). Residue lysine 646 coordinates ATP.

This sequence belongs to the class-I aminoacyl-tRNA synthetase family. IleS type 1 subfamily. Monomer.

It is found in the cytoplasm. The catalysed reaction is tRNA(Ile) + L-isoleucine + ATP = L-isoleucyl-tRNA(Ile) + AMP + diphosphate. In terms of biological role, catalyzes the attachment of isoleucine to tRNA(Ile). As IleRS can inadvertently accommodate and process structurally similar amino acids such as valine, to avoid such errors it has two additional distinct tRNA(Ile)-dependent editing activities. One activity is designated as 'pretransfer' editing and involves the hydrolysis of activated Val-AMP. The other activity is designated 'posttransfer' editing and involves deacylation of mischarged Val-tRNA(Ile). The sequence is that of Isoleucine--tRNA ligase from Bartonella henselae (strain ATCC 49882 / DSM 28221 / CCUG 30454 / Houston 1) (Rochalimaea henselae).